A 645-amino-acid chain; its full sequence is Glucans biosynthesis glucosyltransferase H (645 aa).

Polar residues predominate over residues 1–12; sequence MDGTVTLSSTPT. Positions 1–22 are disordered; that stretch reads MDGTVTLSSTPTAIPPVSALDA. Helical transmembrane passes span 64–84, 98–118, 423–443, 465–485, 504–524, 559–579, and 580–600; these read LIGGTFAATAVAVWVMLSVLW, LFTLLFAWIAMSFASAVAGFV, APMWGLLMLIGIGIPLAGVGI, AIWIFICTMFVLLAPKLLGYI, AVSILLETVLAALMAPVVMYL, YGGLTVFGLFMGAVAYAVSPA, and LAAWMGPVIVGMALSIPVVAL.

This sequence belongs to the glycosyltransferase 2 family. OpgH subfamily.

The protein localises to the cell inner membrane. It functions in the pathway glycan metabolism; osmoregulated periplasmic glucan (OPG) biosynthesis. Its function is as follows. Involved in the biosynthesis of osmoregulated periplasmic glucans (OPGs). The polypeptide is Glucans biosynthesis glucosyltransferase H (Xanthomonas oryzae pv. oryzae (strain MAFF 311018)).